A 530-amino-acid polypeptide reads, in one-letter code: Bifunctional purine biosynthesis protein PurH (530 aa).

The MGS-like domain maps to 1–148 (MEQARPIRRA…KNHKDVAIVV (148 aa)).

Belongs to the PurH family.

The catalysed reaction is (6R)-10-formyltetrahydrofolate + 5-amino-1-(5-phospho-beta-D-ribosyl)imidazole-4-carboxamide = 5-formamido-1-(5-phospho-D-ribosyl)imidazole-4-carboxamide + (6S)-5,6,7,8-tetrahydrofolate. It catalyses the reaction IMP + H2O = 5-formamido-1-(5-phospho-D-ribosyl)imidazole-4-carboxamide. It participates in purine metabolism; IMP biosynthesis via de novo pathway; 5-formamido-1-(5-phospho-D-ribosyl)imidazole-4-carboxamide from 5-amino-1-(5-phospho-D-ribosyl)imidazole-4-carboxamide (10-formyl THF route): step 1/1. Its pathway is purine metabolism; IMP biosynthesis via de novo pathway; IMP from 5-formamido-1-(5-phospho-D-ribosyl)imidazole-4-carboxamide: step 1/1. The polypeptide is Bifunctional purine biosynthesis protein PurH (Aeromonas hydrophila subsp. hydrophila (strain ATCC 7966 / DSM 30187 / BCRC 13018 / CCUG 14551 / JCM 1027 / KCTC 2358 / NCIMB 9240 / NCTC 8049)).